The primary structure comprises 402 residues: Tyrosine--tRNA ligase (402 aa).

Positions 48-57 (PTGSDIHLGH) match the 'HIGH' region motif. The short motif at 235–239 (KMSKS) is the 'KMSKS' region element. Position 238 (K238) interacts with ATP. The S4 RNA-binding domain occupies 338-402 (AKAFYLVSAV…GKKKFVRLVL (65 aa)).

The protein belongs to the class-I aminoacyl-tRNA synthetase family. TyrS type 2 subfamily. Homodimer.

The protein localises to the cytoplasm. The enzyme catalyses tRNA(Tyr) + L-tyrosine + ATP = L-tyrosyl-tRNA(Tyr) + AMP + diphosphate + H(+). Functionally, catalyzes the attachment of tyrosine to tRNA(Tyr) in a two-step reaction: tyrosine is first activated by ATP to form Tyr-AMP and then transferred to the acceptor end of tRNA(Tyr). This is Tyrosine--tRNA ligase from Synechococcus elongatus (strain ATCC 33912 / PCC 7942 / FACHB-805) (Anacystis nidulans R2).